A 152-amino-acid chain; its full sequence is Xanthine-guanine phosphoribosyltransferase (152 aa).

Residues 37 to 38 (RG), R69, and 88 to 96 (DDLVDTGGT) contribute to the 5-phospho-alpha-D-ribose 1-diphosphate site. GMP is bound at residue R69. D89 is a binding site for Mg(2+). Guanine is bound by residues D92 and I135. 2 residues coordinate xanthine: D92 and I135. Residues 92–96 (DTGGT) and 134–135 (WI) each bind GMP.

Belongs to the purine/pyrimidine phosphoribosyltransferase family. XGPT subfamily. Homotetramer. Mg(2+) serves as cofactor.

The protein localises to the cell inner membrane. The catalysed reaction is GMP + diphosphate = guanine + 5-phospho-alpha-D-ribose 1-diphosphate. It carries out the reaction XMP + diphosphate = xanthine + 5-phospho-alpha-D-ribose 1-diphosphate. The enzyme catalyses IMP + diphosphate = hypoxanthine + 5-phospho-alpha-D-ribose 1-diphosphate. It functions in the pathway purine metabolism; GMP biosynthesis via salvage pathway; GMP from guanine: step 1/1. It participates in purine metabolism; XMP biosynthesis via salvage pathway; XMP from xanthine: step 1/1. In terms of biological role, purine salvage pathway enzyme that catalyzes the transfer of the ribosyl-5-phosphate group from 5-phospho-alpha-D-ribose 1-diphosphate (PRPP) to the N9 position of the 6-oxopurines guanine and xanthine to form the corresponding ribonucleotides GMP (guanosine 5'-monophosphate) and XMP (xanthosine 5'-monophosphate), with the release of PPi. To a lesser extent, also acts on hypoxanthine. In Shigella boydii serotype 4 (strain Sb227), this protein is Xanthine-guanine phosphoribosyltransferase.